Consider the following 156-residue polypeptide: Acyl carrier protein, mitochondrial (156 aa).

A mitochondrion-targeting transit peptide spans 1–68; that stretch reads MAVRVLCACV…GRVTQLCRQY (68 aa). The Carrier domain maps to 77-152; the sequence is EGIKDRVLYV…EIVDYIADKK (76 aa). N6-acetyllysine is present on Lys88. Ser112 bears the O-(pantetheine 4'-phosphoryl)serine mark.

As to quaternary structure, mammalian complex I is composed of 45 different subunits. Interacts with ETFRF1. Identified in a complex composed of MALSU1, MIEF1 upstream open reading frame protein and NDUFAB1; within the trimeric complex MIEF1 upstream open reading frame protein functions as a bridging scaffold that interacts with MALSU1 on one side, and with NDUFAB1 on the other side. The complex interacts with the mitochondrial large ribosomal subunit. Interacts with alpha-1-microglobulin chain; this interaction is required for the maintenance of mitochondrial redox homeostasis. Component of the mitochondrial core iron-sulfur cluster (ISC) complex composed of NFS1, LYRM4, NDUFAB1, ISCU, FXN, and FDX2; this complex is a heterohexamer containing two copies of each monomer. Component of the cyteine desulfurase complex composed of NFS1, LYRM4 and NDUFAB1; this complex contributes to the stability and cysteine desulfurase activity of NFS1. In terms of processing, phosphopantetheinylation at Ser-112 is essential for interactions with LYR motif-containing proteins.

The protein localises to the mitochondrion. Its function is as follows. Carrier of the growing fatty acid chain in fatty acid biosynthesis. Accessory and non-catalytic subunit of the mitochondrial membrane respiratory chain NADH dehydrogenase (Complex I), which functions in the transfer of electrons from NADH to the respiratory chain. Accessory protein, of the core iron-sulfur cluster (ISC) assembly complex, that regulates, in association with LYRM4, the stability and the cysteine desulfurase activity of NFS1 and participates in the [2Fe-2S] clusters assembly on the scaffolding protein ISCU. The core iron-sulfur cluster (ISC) assembly complex is involved in the de novo synthesis of a [2Fe-2S] cluster, the first step of the mitochondrial iron-sulfur protein biogenesis. This process is initiated by the cysteine desulfurase complex (NFS1:LYRM4:NDUFAB1) that produces persulfide which is delivered on the scaffold protein ISCU in a FXN-dependent manner. Then this complex is stabilized by FDX2 which provides reducing equivalents to accomplish the [2Fe-2S] cluster assembly. Finally, the [2Fe-2S] cluster is transferred from ISCU to chaperone proteins, including HSCB, HSPA9 and GLRX5. This Bos taurus (Bovine) protein is Acyl carrier protein, mitochondrial.